The primary structure comprises 522 residues: 2-isopropylmalate synthase (522 aa).

Residues 5–267 (VIIFDTTLRD…ETGINAKEIH (263 aa)) enclose the Pyruvate carboxyltransferase domain. Mn(2+) is bound by residues D14, H202, H204, and N238. A regulatory domain region spans residues 392-522 (QLQQLVVQSD…MHKNRELGGV (131 aa)).

Belongs to the alpha-IPM synthase/homocitrate synthase family. LeuA type 1 subfamily. Homodimer. Mn(2+) is required as a cofactor.

It is found in the cytoplasm. It catalyses the reaction 3-methyl-2-oxobutanoate + acetyl-CoA + H2O = (2S)-2-isopropylmalate + CoA + H(+). It functions in the pathway amino-acid biosynthesis; L-leucine biosynthesis; L-leucine from 3-methyl-2-oxobutanoate: step 1/4. Catalyzes the condensation of the acetyl group of acetyl-CoA with 3-methyl-2-oxobutanoate (2-ketoisovalerate) to form 3-carboxy-3-hydroxy-4-methylpentanoate (2-isopropylmalate). The sequence is that of 2-isopropylmalate synthase from Shewanella sp. (strain MR-7).